The primary structure comprises 403 residues: Poly(rC)-binding protein 4 (403 aa).

KH domains are found at residues T17–G67, P101–G154, and T241–G293.

The protein resides in the cytoplasm. Its function is as follows. Single-stranded nucleic acid binding protein that binds preferentially to oligo dC. The protein is Poly(rC)-binding protein 4 (PCBP4) of Homo sapiens (Human).